The primary structure comprises 440 residues: UDP-N-acetylmuramoylalanine--D-glutamate ligase (440 aa).

115 to 121 contacts ATP; the sequence is GSNGKST.

The protein belongs to the MurCDEF family.

It localises to the cytoplasm. It carries out the reaction UDP-N-acetyl-alpha-D-muramoyl-L-alanine + D-glutamate + ATP = UDP-N-acetyl-alpha-D-muramoyl-L-alanyl-D-glutamate + ADP + phosphate + H(+). It functions in the pathway cell wall biogenesis; peptidoglycan biosynthesis. Its function is as follows. Cell wall formation. Catalyzes the addition of glutamate to the nucleotide precursor UDP-N-acetylmuramoyl-L-alanine (UMA). In Vibrio cholerae serotype O1 (strain ATCC 39315 / El Tor Inaba N16961), this protein is UDP-N-acetylmuramoylalanine--D-glutamate ligase.